We begin with the raw amino-acid sequence, 372 residues long: 4-hydroxy-3-methylbut-2-en-1-yl diphosphate synthase (flavodoxin) (372 aa).

[4Fe-4S] cluster contacts are provided by cysteine 270, cysteine 273, cysteine 305, and glutamate 312.

This sequence belongs to the IspG family. Requires [4Fe-4S] cluster as cofactor.

The enzyme catalyses (2E)-4-hydroxy-3-methylbut-2-enyl diphosphate + oxidized [flavodoxin] + H2O + 2 H(+) = 2-C-methyl-D-erythritol 2,4-cyclic diphosphate + reduced [flavodoxin]. Its pathway is isoprenoid biosynthesis; isopentenyl diphosphate biosynthesis via DXP pathway; isopentenyl diphosphate from 1-deoxy-D-xylulose 5-phosphate: step 5/6. In terms of biological role, converts 2C-methyl-D-erythritol 2,4-cyclodiphosphate (ME-2,4cPP) into 1-hydroxy-2-methyl-2-(E)-butenyl 4-diphosphate. This chain is 4-hydroxy-3-methylbut-2-en-1-yl diphosphate synthase (flavodoxin), found in Shigella boydii serotype 18 (strain CDC 3083-94 / BS512).